The following is a 158-amino-acid chain: Snaclec agglucetin subunit alpha-2 (158 aa).

The first 23 residues, 1-23 (MGRFIFVSFGLLVVFLSLSGTGA), serve as a signal peptide directing secretion. 3 cysteine pairs are disulfide-bonded: Cys27-Cys38, Cys55-Cys152, and Cys127-Cys144. Positions 34–153 (YDQYCYQVIK…CIQLNPFVCK (120 aa)) constitute a C-type lectin domain.

This sequence belongs to the snaclec family. Heterotetramer of the subunits alpha-1, alpha-2, beta-1 and beta-2; disulfide-linked. As to expression, expressed by the venom gland.

It localises to the secreted. Agglucetin specifically causes platelet aggregation and surface exposure of integrin alpha-IIb/beta-3 with a GPIb-(GP1BA-) dependent manner in washed platelets. It binds to human platelets in a saturable manner, and its binding is specifically blocked by anti-GP Ib mAb. It regulates endothelial cell survival and promotes angiogenesis by activating integrin alpha-v/beta-3 signaling through FAK/phosphatidylinositol 3-kinase (PI3K)/Akt pathway. This chain is Snaclec agglucetin subunit alpha-2, found in Deinagkistrodon acutus (Hundred-pace snake).